The chain runs to 141 residues: Nucleoside diphosphate kinase (141 aa).

Residues lysine 11, phenylalanine 59, arginine 87, threonine 93, arginine 104, and asparagine 114 each coordinate ATP. The active-site Pros-phosphohistidine intermediate is the histidine 117.

This sequence belongs to the NDK family. In terms of assembly, homotetramer. It depends on Mg(2+) as a cofactor.

It localises to the cytoplasm. It carries out the reaction a 2'-deoxyribonucleoside 5'-diphosphate + ATP = a 2'-deoxyribonucleoside 5'-triphosphate + ADP. The enzyme catalyses a ribonucleoside 5'-diphosphate + ATP = a ribonucleoside 5'-triphosphate + ADP. Major role in the synthesis of nucleoside triphosphates other than ATP. The ATP gamma phosphate is transferred to the NDP beta phosphate via a ping-pong mechanism, using a phosphorylated active-site intermediate. The protein is Nucleoside diphosphate kinase of Neisseria meningitidis serogroup A / serotype 4A (strain DSM 15465 / Z2491).